Here is a 238-residue protein sequence, read N- to C-terminus: Synapse differentiation-inducing gene protein 1-like (238 aa).

Disordered stretches follow at residues 1-24 (MESL…GPYP), 78-111 (KVKE…PGQA), and 126-155 (EEFQ…NFLT). Residues 1–162 (MESLSELQNP…FLTLPPRDHL (162 aa)) lie on the Extracellular side of the membrane. The span at 133–151 (GDPEEEESDATSTESESED) shows a compositional bias: acidic residues. A helical transmembrane segment spans residues 163–183 (GLTIFSMLCCFWPLGIAAFYF). Residues 184 to 205 (SQGTSKAISKGDFRLANTTSRR) are Cytoplasmic-facing. A helical membrane pass occupies residues 206 to 226 (ALFLATLSIAVGAGLYVAVVV). Residues 227 to 238 (ALAAYMSQNGHS) are Extracellular-facing.

Belongs to the CD225/Dispanin family.

Its subcellular location is the membrane. It localises to the golgi apparatus. The protein resides in the cis-Golgi network. This Bos taurus (Bovine) protein is Synapse differentiation-inducing gene protein 1-like (SYNDIG1L).